Here is a 236-residue protein sequence, read N- to C-terminus: Uridylate kinase (236 aa).

ATP is bound at residue 10 to 13; sequence KLSG. Residue G52 participates in UMP binding. Residues G53 and R57 each contribute to the ATP site. Residues D72 and 133–140 each bind UMP; that span reads TGNPFFTT. ATP contacts are provided by T160, Y166, and D169.

The protein belongs to the UMP kinase family. In terms of assembly, homohexamer.

The protein resides in the cytoplasm. It carries out the reaction UMP + ATP = UDP + ADP. Its pathway is pyrimidine metabolism; CTP biosynthesis via de novo pathway; UDP from UMP (UMPK route): step 1/1. With respect to regulation, inhibited by UTP. In terms of biological role, catalyzes the reversible phosphorylation of UMP to UDP. This chain is Uridylate kinase, found in Polaromonas sp. (strain JS666 / ATCC BAA-500).